We begin with the raw amino-acid sequence, 336 residues long: NADH-quinone oxidoreductase subunit H (336 aa).

8 consecutive transmembrane segments (helical) span residues 4–24 (YILW…LVVA), 75–95 (YLFF…WAVI), 108–128 (LGLL…VIAG), 154–174 (MGFA…TGII), 181–201 (LWHW…IAGI), 233–253 (LFFL…SIMF), 272–292 (FVPG…MFLW), and 308–328 (LGWK…ACMV).

The protein belongs to the complex I subunit 1 family. As to quaternary structure, NDH-1 is composed of 14 different subunits. Subunits NuoA, H, J, K, L, M, N constitute the membrane sector of the complex.

The protein localises to the cell inner membrane. The enzyme catalyses a quinone + NADH + 5 H(+)(in) = a quinol + NAD(+) + 4 H(+)(out). Functionally, NDH-1 shuttles electrons from NADH, via FMN and iron-sulfur (Fe-S) centers, to quinones in the respiratory chain. The immediate electron acceptor for the enzyme in this species is believed to be ubiquinone. Couples the redox reaction to proton translocation (for every two electrons transferred, four hydrogen ions are translocated across the cytoplasmic membrane), and thus conserves the redox energy in a proton gradient. This subunit may bind ubiquinone. This Francisella philomiragia subsp. philomiragia (strain ATCC 25017 / CCUG 19701 / FSC 153 / O#319-036) protein is NADH-quinone oxidoreductase subunit H.